A 173-amino-acid polypeptide reads, in one-letter code: NADH-ubiquinone oxidoreductase chain 6 (173 aa).

5 helical membrane-spanning segments follow: residues 1 to 21, 27 to 47, 48 to 68, 87 to 107, and 139 to 159; these read MTYF…AVAS, YGVV…VNLG, VSFV…VVFV, VMGY…LGGF, and YGVG…FVVL.

This sequence belongs to the complex I subunit 6 family.

Its subcellular location is the mitochondrion membrane. The catalysed reaction is a ubiquinone + NADH + 5 H(+)(in) = a ubiquinol + NAD(+) + 4 H(+)(out). Functionally, core subunit of the mitochondrial membrane respiratory chain NADH dehydrogenase (Complex I) that is believed to belong to the minimal assembly required for catalysis. Complex I functions in the transfer of electrons from NADH to the respiratory chain. The immediate electron acceptor for the enzyme is believed to be ubiquinone. The sequence is that of NADH-ubiquinone oxidoreductase chain 6 (MT-ND6) from Coturnix japonica (Japanese quail).